We begin with the raw amino-acid sequence, 643 residues long: Long-chain fatty acid transport protein 4 (643 aa).

2 consecutive transmembrane segments (helical) span residues 20 to 42 (LPWT…WRFI) and 139 to 156 (FVGL…AALI). 243–254 (YIYTSGTTGLPK) lines the AMP pocket.

Belongs to the ATP-dependent AMP-binding enzyme family.

It localises to the endoplasmic reticulum membrane. The catalysed reaction is a fatty acid(in) = a fatty acid(out). It carries out the reaction (9Z,12Z)-octadecadienoate(out) = (9Z,12Z)-octadecadienoate(in). It catalyses the reaction (9Z)-octadecenoate(out) = (9Z)-octadecenoate(in). The enzyme catalyses hexadecanoate(out) = hexadecanoate(in). The catalysed reaction is a long-chain fatty acid + ATP + CoA = a long-chain fatty acyl-CoA + AMP + diphosphate. It carries out the reaction (5Z,8Z,11Z,14Z)-eicosatetraenoate + ATP + CoA = (5Z,8Z,11Z,14Z)-eicosatetraenoyl-CoA + AMP + diphosphate. It catalyses the reaction (9Z)-octadecenoate + ATP + CoA = (9Z)-octadecenoyl-CoA + AMP + diphosphate. The enzyme catalyses hexadecanoate + ATP + CoA = hexadecanoyl-CoA + AMP + diphosphate. The catalysed reaction is (E)-hexadec-2-enoate + ATP + CoA = (2E)-hexadecenoyl-CoA + AMP + diphosphate. It carries out the reaction a very long-chain fatty acid + ATP + CoA = a very long-chain fatty acyl-CoA + AMP + diphosphate. It catalyses the reaction tetracosanoate + ATP + CoA = tetracosanoyl-CoA + AMP + diphosphate. Functionally, mediates the import of long-chain fatty acids (LCFA) into the cell by facilitating their transport across cell membranes. Appears to be the principal fatty acid transporter in small intestinal enterocytes. Also functions as an acyl-CoA ligase catalyzing the ATP-dependent formation of fatty acyl-CoA using LCFA and very-long-chain fatty acids (VLCFA) as substrates, which prevents fatty acid efflux from cells and might drive more fatty acid uptake. Plays a role in the formation of the epidermal barrier. Required for fat absorption in early embryogenesis. Probably involved in fatty acid transport across the blood barrier. Indirectly inhibits RPE65 via substrate competition and via production of VLCFA derivatives like lignoceroyl-CoA. Prevents light-induced degeneration of rods and cones. The sequence is that of Long-chain fatty acid transport protein 4 (SLC27A4) from Pongo abelii (Sumatran orangutan).